Reading from the N-terminus, the 296-residue chain is Lipoyl synthase (296 aa).

Cys-38, Cys-43, Cys-49, Cys-64, Cys-68, Cys-71, and Ser-279 together coordinate [4Fe-4S] cluster. A Radical SAM core domain is found at 50–268 (WDGGCLTFMV…AEYGRSLGFK (219 aa)).

It belongs to the radical SAM superfamily. Lipoyl synthase family. [4Fe-4S] cluster serves as cofactor.

It is found in the cytoplasm. It catalyses the reaction [[Fe-S] cluster scaffold protein carrying a second [4Fe-4S](2+) cluster] + N(6)-octanoyl-L-lysyl-[protein] + 2 oxidized [2Fe-2S]-[ferredoxin] + 2 S-adenosyl-L-methionine + 4 H(+) = [[Fe-S] cluster scaffold protein] + N(6)-[(R)-dihydrolipoyl]-L-lysyl-[protein] + 4 Fe(3+) + 2 hydrogen sulfide + 2 5'-deoxyadenosine + 2 L-methionine + 2 reduced [2Fe-2S]-[ferredoxin]. Its pathway is protein modification; protein lipoylation via endogenous pathway; protein N(6)-(lipoyl)lysine from octanoyl-[acyl-carrier-protein]: step 2/2. Functionally, catalyzes the radical-mediated insertion of two sulfur atoms into the C-6 and C-8 positions of the octanoyl moiety bound to the lipoyl domains of lipoate-dependent enzymes, thereby converting the octanoylated domains into lipoylated derivatives. The protein is Lipoyl synthase of Methanocella arvoryzae (strain DSM 22066 / NBRC 105507 / MRE50).